An 860-amino-acid chain; its full sequence is MQEQYRPEEIESKVQLHWDEKRTFEVTEDESKEKYYCLSMLPYPSGRLHMGHVRNYTIGDVVARYQRMLGKNVLQPIGWDAFGLPAEGAAVKNNTAPAPWTYDNIAYMKNQLKTLGFGYDWSREIATCTPEYYRWEQKFFTELYKKGLVYKKTSAVNWCPNDQTVLANEQVIDGCCWRCDTKVERKEIPQWFIKITAYADELLRDLDKLDHWPDTVKTMQRNWIGRSEGVEITFDVKGYDNTLTVYTTRPDTFMGATYLAVAAGHPLAQKAAANNAELAAFIDECRNTKVAEAEMATMEKKGVDTGYKAIHPLTGEEIPVWAANFVLMEYGTGAVMAVPGHDQRDYEFASKYGLTIKPVILAADGSEPDLSEQALTEKGVLFNSGEFDGLAFEAAFNAIADKLAEKGVGERKVNYRLRDWGVSRQRYWGAPIPMVTLEDGTVLPTPEDQLPVILPEDVVMDGITSPIKADPEWAKTTVNGMPALRETDTFDTFMESSWYYARYTCPQYQEGMLDSKAANYWLPVDIYIGGIEHAIMHLLYFRFFHKLMRDAGMVTSDEPAKQLLCQGMVLADAFYYVGENGERNWVSPVDAIVERDEKGRIVKAKDAAGHELVYTGMSKMSKSKNNGIDPQVMVERYGADTVRLFMMFASPADMTLEWQESGVEGANRFIKRVWKLVYEHTAKGPVAALNVDALSEDQKALRRDVHKTIAKVTDDIGRRQTFNTAIAAIMELMNKLAKAPQEGEQDRALLQEALQAVVRMLNPFTPHVCFTLWQELGGEGDIDNAPWPVADEQAMVENTTLVVVQVNGKVRGKITVAVDATEEQVRERAGQEHLVAKYLDGVTVRKVIYVPGKLLNLVVG.

A 'HIGH' region motif is present at residues 42 to 52; sequence PYPSGRLHMGH. Positions 619–623 match the 'KMSKS' region motif; that stretch reads KMSKS. Residue K622 coordinates ATP.

It belongs to the class-I aminoacyl-tRNA synthetase family.

The protein localises to the cytoplasm. It catalyses the reaction tRNA(Leu) + L-leucine + ATP = L-leucyl-tRNA(Leu) + AMP + diphosphate. In Salmonella agona (strain SL483), this protein is Leucine--tRNA ligase.